A 101-amino-acid chain; its full sequence is MATAKKINLRPLDDRVVVQPSEAEETTAGGIVLPDSAKEKPQRGTVVAVGPGKLLDSGNRGELSVSVGDVVIYGKYGGSEIEVDGHEMKILRESDILAKIG.

It belongs to the GroES chaperonin family. As to quaternary structure, heptamer of 7 subunits arranged in a ring. Interacts with the chaperonin GroEL.

The protein localises to the cytoplasm. Functionally, together with the chaperonin GroEL, plays an essential role in assisting protein folding. The GroEL-GroES system forms a nano-cage that allows encapsulation of the non-native substrate proteins and provides a physical environment optimized to promote and accelerate protein folding. GroES binds to the apical surface of the GroEL ring, thereby capping the opening of the GroEL channel. This Rhodopirellula baltica (strain DSM 10527 / NCIMB 13988 / SH1) protein is Co-chaperonin GroES 1.